We begin with the raw amino-acid sequence, 565 residues long: Sulfite reductase [NADPH] hemoprotein beta-component (565 aa).

Residues Cys-429, Cys-435, Cys-474, and Cys-478 each contribute to the [4Fe-4S] cluster site. Cys-478 serves as a coordination point for siroheme.

This sequence belongs to the nitrite and sulfite reductase 4Fe-4S domain family. Alpha(8)-beta(8). The alpha component is a flavoprotein, the beta component is a hemoprotein. Siroheme is required as a cofactor. It depends on [4Fe-4S] cluster as a cofactor.

It catalyses the reaction hydrogen sulfide + 3 NADP(+) + 3 H2O = sulfite + 3 NADPH + 4 H(+). Its pathway is sulfur metabolism; hydrogen sulfide biosynthesis; hydrogen sulfide from sulfite (NADPH route): step 1/1. Its function is as follows. Component of the sulfite reductase complex that catalyzes the 6-electron reduction of sulfite to sulfide. This is one of several activities required for the biosynthesis of L-cysteine from sulfate. This is Sulfite reductase [NADPH] hemoprotein beta-component from Shewanella baltica (strain OS155 / ATCC BAA-1091).